We begin with the raw amino-acid sequence, 1041 residues long: Collagen alpha-2(I) chain (1041 aa).

The segment at 1–1041 is disordered; that stretch reads SGGFDFSFLP…FGYEGDFYRA (1041 aa). Pro-10, Pro-13, Pro-39, and Pro-45 each carry 4-hydroxyproline. Composition is skewed to low complexity over residues 25–45 and 55–76; these read LGPG…SGAP and EPGE…PPGK. The span at 77 to 91 shows a compositional bias: basic and acidic residues; sequence AGEDGHPGKPGRPGE. Lys-113 bears the 5-hydroxylysine; alternate mark. Lys-113 is a glycosylation site (O-linked (Gal...) hydroxylysine; alternate). Composition is skewed to low complexity over residues 174–189 and 235–256; these read SVGP…SAGP and PGAN…AGAP. The segment covering 290–299 has biased composition (gly residues); the sequence is GESGGKGEPG. Low complexity predominate over residues 300–310; sequence SAGPQGPPGSS. A compositionally biased stretch (gly residues) spans 332 to 341; it reads GLRGGPGSRG. Positions 354-370 are enriched in low complexity; sequence PAGARGASGPAGVRGPS. Residues Pro-376 and Pro-379 each carry the 4-hydroxyproline modification. The segment covering 405 to 424 has biased composition (low complexity); it reads LPGIDGRPGPIGPAGARGEA. Gly residues predominate over residues 466 to 475; it reads GVQGGKGEQG. 2 stretches are compositionally biased toward low complexity: residues 522–539 and 551–561; these read SGES…SRGP and EPGVVGAPGTA. The span at 562 to 571 shows a compositional bias: gly residues; the sequence is GPAGSGGLPG. Low complexity-rich tracts occupy residues 594–638 and 645–665; these read VGTT…PRGS and VGPA…QPGA. Over residues 666–675 the composition is skewed to basic and acidic residues; sequence KGERGTKGPK. Residues 683–693 show a composition bias toward low complexity; the sequence is PTGPVGSAGPA. The segment covering 703–712 has biased composition (gly residues); sequence GSRGDGGPPG. The span at 714-723 shows a compositional bias: low complexity; sequence TGFPGAAGRT. The segment covering 754 to 768 has biased composition (gly residues); that stretch reads GPVGRGETGAGGPPG. Composition is skewed to low complexity over residues 769–803 and 811–821; these read FTGE…LGLP and LPGVAGAVGEP. The span at 822–840 shows a compositional bias: gly residues; that stretch reads GPLGIGPPGARGPSGGVPG. Low complexity-rich tracts occupy residues 874-887 and 903-918; these read YAGN…AGAP and EPGP…ALGP. Residues 928–939 show a composition bias toward basic and acidic residues; sequence RGDKGEAGDKGP. Positions 1013–1023 are enriched in pro residues; sequence PAGPPGPPGPP.

It belongs to the fibrillar collagen family. Trimers of one alpha 2(I) and two alpha 1(I) chains. Interacts (via C-terminus) with TMEM131 (via PapD-L domain); the interaction is direct and is involved in assembly and TRAPPIII ER-to-Golgi transport complex-dependent secretion of collagen. Post-translationally, prolines at the third position of the tripeptide repeating unit (G-X-Y) are hydroxylated in some or all of the chains. Expressed in bones.

The protein localises to the secreted. Its subcellular location is the extracellular space. It localises to the extracellular matrix. In terms of biological role, type I collagen is a member of group I collagen (fibrillar forming collagen). This chain is Collagen alpha-2(I) chain, found in Paramylodon harlani (Harlan's ground sloth).